We begin with the raw amino-acid sequence, 304 residues long: Mas-related G-protein coupled receptor member A1 (304 aa).

Residues 1 to 17 are Extracellular-facing; sequence MDNTIPGGINITILIPN. N-linked (GlcNAc...) asparagine glycosylation occurs at Asn10. The helical transmembrane segment at 18-38 threads the bilayer; it reads LMIIIFGLVGLTGNGIVFWLL. The Cytoplasmic segment spans residues 39–53; sequence GFCLHRNAFSVYILN. Residues 54 to 74 form a helical membrane-spanning segment; it reads LALADFFFLLGHIIDSILLLL. Asn75 is a topological domain (extracellular). A helical membrane pass occupies residues 76-96; it reads VFYPITFLLCFYTIMMVLYIA. Residues 97-131 are Cytoplasmic-facing; sequence GLSMLSAISTERCLSVLCPIWYHCHRPEHTSTVMC. Residues 132 to 152 traverse the membrane as a helical segment; sequence AVIWVLSLLICILNSYFCGFL. Topologically, residues 153–166 are extracellular; the sequence is NTQYKNENGCLALN. Residues 167 to 187 form a helical membrane-spanning segment; sequence FFTAAYLMFLFVVLCLSSLAL. Residues 188–206 lie on the Cytoplasmic side of the membrane; the sequence is VARLFCGTGQIKLTRLYVT. A helical membrane pass occupies residues 207 to 227; sequence IILSILVFLLCGLPFGIHWFL. At 228–243 the chain is on the extracellular side; sequence LFKIKDDFHVFDLGFY. Residues 244–264 traverse the membrane as a helical segment; it reads LASVVLTAINSCANPIIYFFV. At 265–304 the chain is on the cytoplasmic side; sequence GSFRHRLKHQTLKMVLQNALQDTPETAKIMVEMSRSKSEP.

The protein belongs to the G-protein coupled receptor 1 family. Mas subfamily. As to expression, expressed in a subset of sensory neurons that includes nociceptors. Expressed in the subclass of non-peptidergic sensory neurons that are IB4(+) and VR1(-).

Its subcellular location is the cell membrane. In terms of biological role, orphan receptor activated by a subset of RFamide-family neuropeptides such as FLRF-amide and FMRF-amide. Mediates its action by association with G proteins that activate a phosphatidylinositol-calcium second messenger system. Its effect is mediated by G(q) and G(11) proteins. May regulate the function of nociceptive neurons by modulation of pain perception. This Mus musculus (Mouse) protein is Mas-related G-protein coupled receptor member A1 (Mrgpra1).